Here is a 509-residue protein sequence, read N- to C-terminus: Sperm-associated antigen 6 (509 aa).

ARM repeat units lie at residues 31-70 (PQNI…RLAN), 73-112 (DDLA…AVGK), 115-154 (PQLA…YIAR), 157-196 (AELS…DIAK), 199-238 (PELA…QVSK), 241-280 (VDLA…EIAK), 325-365 (ENLA…QIGR), and 368-409 (PEHA…NILQ).

In terms of assembly, interacts with SPAG16 and SPAG17. As to expression, highly expressed in testis.

The protein resides in the cytoplasm. Its subcellular location is the cytoskeleton. It localises to the cell projection. It is found in the cilium. The protein localises to the flagellum. The protein resides in the cilium axoneme. Important for structural integrity of the central apparatus in the sperm tail and for flagellar motility. This chain is Sperm-associated antigen 6 (SPAG6), found in Homo sapiens (Human).